Here is a 406-residue protein sequence, read N- to C-terminus: Enoyl-[acyl-carrier-protein] reductase [NADH] (406 aa).

NAD(+) contacts are provided by residues 48-53, 74-75, 111-112, and 140-141; these read GASTGF, FE, DA, and IA. Tyr-226 contributes to the substrate binding site. Tyr-236 functions as the Proton donor in the catalytic mechanism. NAD(+) contacts are provided by residues Lys-245 and 275-277; that span reads LVT.

Belongs to the TER reductase family. In terms of assembly, monomer.

It catalyses the reaction a 2,3-saturated acyl-[ACP] + NAD(+) = a (2E)-enoyl-[ACP] + NADH + H(+). Its pathway is lipid metabolism; fatty acid biosynthesis. In terms of biological role, involved in the final reduction of the elongation cycle of fatty acid synthesis (FAS II). Catalyzes the reduction of a carbon-carbon double bond in an enoyl moiety that is covalently linked to an acyl carrier protein (ACP). This Coxiella burnetii (strain RSA 331 / Henzerling II) protein is Enoyl-[acyl-carrier-protein] reductase [NADH].